Consider the following 71-residue polypeptide: Beta-defensin 7 (71 aa).

An N-terminal signal peptide occupies residues M1–S22. Pyrrolidone carboxylic acid is present on Q23. Positions Q23–I25 are excised as a propeptide. 3 disulfide bridges follow: C31/C58, C38/C52, and C42/C59.

This sequence belongs to the beta-defensin family. LAP/TAP subfamily.

The protein resides in the secreted. In terms of biological role, has bactericidal activity. In Mus musculus (Mouse), this protein is Beta-defensin 7 (Defb7).